We begin with the raw amino-acid sequence, 424 residues long: Serine--tRNA ligase (424 aa).

230 to 232 contributes to the L-serine binding site; it reads TAE. 261-263 lines the ATP pocket; sequence RSE. E284 lines the L-serine pocket. 348 to 351 contributes to the ATP binding site; that stretch reads EISS. Residue S384 coordinates L-serine.

It belongs to the class-II aminoacyl-tRNA synthetase family. Type-1 seryl-tRNA synthetase subfamily. In terms of assembly, homodimer. The tRNA molecule binds across the dimer.

The protein localises to the cytoplasm. The enzyme catalyses tRNA(Ser) + L-serine + ATP = L-seryl-tRNA(Ser) + AMP + diphosphate + H(+). It catalyses the reaction tRNA(Sec) + L-serine + ATP = L-seryl-tRNA(Sec) + AMP + diphosphate + H(+). It functions in the pathway aminoacyl-tRNA biosynthesis; selenocysteinyl-tRNA(Sec) biosynthesis; L-seryl-tRNA(Sec) from L-serine and tRNA(Sec): step 1/1. In terms of biological role, catalyzes the attachment of serine to tRNA(Ser). Is also able to aminoacylate tRNA(Sec) with serine, to form the misacylated tRNA L-seryl-tRNA(Sec), which will be further converted into selenocysteinyl-tRNA(Sec). This chain is Serine--tRNA ligase, found in Streptococcus pneumoniae (strain 70585).